The sequence spans 570 residues: Glycine--tRNA ligase (570 aa).

Positions 95 and 159 each coordinate substrate. ATP contacts are provided by residues 191-193, 201-206, 312-313, and 426-429; these read RNE, IRLREF, EV, and GLDR. Substrate is bound at residue 206–210; it reads FNQAE. Residue 422–426 coordinates substrate; it reads EPSFG.

It belongs to the class-II aminoacyl-tRNA synthetase family.

It localises to the cytoplasm. The enzyme catalyses tRNA(Gly) + glycine + ATP = glycyl-tRNA(Gly) + AMP + diphosphate. In terms of biological role, catalyzes the attachment of glycine to tRNA(Gly). The chain is Glycine--tRNA ligase from Archaeoglobus fulgidus (strain ATCC 49558 / DSM 4304 / JCM 9628 / NBRC 100126 / VC-16).